A 106-amino-acid polypeptide reads, in one-letter code: Small ribosomal subunit protein bS18 (106 aa).

Residues Met-1–Arg-39 are disordered.

The protein belongs to the bacterial ribosomal protein bS18 family. Part of the 30S ribosomal subunit. Forms a tight heterodimer with protein bS6.

Its function is as follows. Binds as a heterodimer with protein bS6 to the central domain of the 16S rRNA, where it helps stabilize the platform of the 30S subunit. The protein is Small ribosomal subunit protein bS18 of Sorangium cellulosum (strain So ce56) (Polyangium cellulosum (strain So ce56)).